Consider the following 399-residue polypeptide: Succinate--CoA ligase [ADP-forming] subunit beta (399 aa).

Residues 9 to 254 (KALLREFGVP…ESEEDAKEIE (246 aa)) form the ATP-grasp domain. Residues Lys46, 53-55 (GRG), Glu109, Ser112, and Glu117 contribute to the ATP site. The Mg(2+) site is built by Asn209 and Asp223. Residues Asn274 and 331 to 333 (GIM) contribute to the substrate site.

It belongs to the succinate/malate CoA ligase beta subunit family. In terms of assembly, heterotetramer of two alpha and two beta subunits. The cofactor is Mg(2+).

It catalyses the reaction succinate + ATP + CoA = succinyl-CoA + ADP + phosphate. It carries out the reaction GTP + succinate + CoA = succinyl-CoA + GDP + phosphate. Its pathway is carbohydrate metabolism; tricarboxylic acid cycle; succinate from succinyl-CoA (ligase route): step 1/1. Its function is as follows. Succinyl-CoA synthetase functions in the citric acid cycle (TCA), coupling the hydrolysis of succinyl-CoA to the synthesis of either ATP or GTP and thus represents the only step of substrate-level phosphorylation in the TCA. The beta subunit provides nucleotide specificity of the enzyme and binds the substrate succinate, while the binding sites for coenzyme A and phosphate are found in the alpha subunit. This chain is Succinate--CoA ligase [ADP-forming] subunit beta, found in Nitrobacter winogradskyi (strain ATCC 25391 / DSM 10237 / CIP 104748 / NCIMB 11846 / Nb-255).